A 100-amino-acid polypeptide reads, in one-letter code: uncharacterized protein (100 aa).

Helical transmembrane passes span Leu50–Phe70 and Asp75–Val95.

Its subcellular location is the membrane. This is an uncharacterized protein from Saccharomyces cerevisiae (strain ATCC 204508 / S288c) (Baker's yeast).